Consider the following 175-residue polypeptide: Large ribosomal subunit protein uL18 (175 aa).

This sequence belongs to the universal ribosomal protein uL18 family. In terms of assembly, part of the 50S ribosomal subunit. Contacts the 5S and 23S rRNAs.

This is one of the proteins that bind and probably mediate the attachment of the 5S RNA into the large ribosomal subunit, where it forms part of the central protuberance. The protein is Large ribosomal subunit protein uL18 of Methanoculleus marisnigri (strain ATCC 35101 / DSM 1498 / JR1).